A 287-amino-acid chain; its full sequence is MAAITAALVKELRERTGEGMMDCKKALEKAGGDIEKAIDDMRASGAIKAAKKAGNVAAEGAIAVKTDGKAAVLLEVNSQTDFLALQDDFKNFVAESIEEAFAQKLTDAAPLIASRESAREALVAKCGENVNIRRLVRVEGDVVGAYLHGNKIGAVVVLKGGDVELAKNIAMHVAASNPEFLDASEISAEAIEREKNVFLQLNADKIAGKPENIVENMINGRITKFKAEASLKEQAFVMNPEVKVGELAKKAGAEIVSFTYFKVGEGIEKPVDNFAEEVAAQVAAAKQ.

The tract at residues 80-83 (TDFL) is involved in Mg(2+) ion dislocation from EF-Tu.

Belongs to the EF-Ts family.

It is found in the cytoplasm. Its function is as follows. Associates with the EF-Tu.GDP complex and induces the exchange of GDP to GTP. It remains bound to the aminoacyl-tRNA.EF-Tu.GTP complex up to the GTP hydrolysis stage on the ribosome. The chain is Elongation factor Ts from Pseudomonas entomophila (strain L48).